Reading from the N-terminus, the 38-residue chain is Photosystem II reaction center protein L (38 aa).

The helical transmembrane segment at 17 to 37 (SLYWGLLLIFVLAVLFSSYFF) threads the bilayer.

It belongs to the PsbL family. In terms of assembly, PSII is composed of 1 copy each of membrane proteins PsbA, PsbB, PsbC, PsbD, PsbE, PsbF, PsbH, PsbI, PsbJ, PsbK, PsbL, PsbM, PsbT, PsbX, PsbY, PsbZ, Psb30/Ycf12, at least 3 peripheral proteins of the oxygen-evolving complex and a large number of cofactors. It forms dimeric complexes.

The protein localises to the plastid. It localises to the chloroplast thylakoid membrane. Functionally, one of the components of the core complex of photosystem II (PSII). PSII is a light-driven water:plastoquinone oxidoreductase that uses light energy to abstract electrons from H(2)O, generating O(2) and a proton gradient subsequently used for ATP formation. It consists of a core antenna complex that captures photons, and an electron transfer chain that converts photonic excitation into a charge separation. This subunit is found at the monomer-monomer interface and is required for correct PSII assembly and/or dimerization. This Thalassiosira pseudonana (Marine diatom) protein is Photosystem II reaction center protein L.